The sequence spans 1774 residues: U3 small nucleolar RNA-associated protein 10 (1774 aa).

Positions Thr1209–Pro1228 are disordered. Residues Leu1734–Tyr1772 form an HEAT repeat.

It belongs to the HEATR1/UTP10 family. In terms of assembly, component of the ribosomal small subunit (SSU) processome.

It localises to the nucleus. The protein localises to the nucleolus. Functionally, involved in nucleolar processing of pre-18S ribosomal RNA. Involved in ribosome biosynthesis. The sequence is that of U3 small nucleolar RNA-associated protein 10 from Eremothecium gossypii (strain ATCC 10895 / CBS 109.51 / FGSC 9923 / NRRL Y-1056) (Yeast).